We begin with the raw amino-acid sequence, 717 residues long: UvrABC system protein C (717 aa).

Positions 16–95 constitute a GIY-YIG domain; that stretch reads DAPGVYRFHD…IKEYDPRFNV (80 aa). The region spanning 208–243 is the UVR domain; the sequence is DTLIRKLDREMRQASEELEFERAARLRDDLEALRRA. Disordered stretches follow at residues 517–555 and 696–717; these read TAAG…GRPR and HAAL…GESQ. Composition is skewed to basic and acidic residues over residues 541 to 553 and 707 to 717; these read EAER…ETGR and ESRDNAEGESQ.

Belongs to the UvrC family. In terms of assembly, interacts with UvrB in an incision complex.

Its subcellular location is the cytoplasm. Functionally, the UvrABC repair system catalyzes the recognition and processing of DNA lesions. UvrC both incises the 5' and 3' sides of the lesion. The N-terminal half is responsible for the 3' incision and the C-terminal half is responsible for the 5' incision. In Saccharopolyspora erythraea (strain ATCC 11635 / DSM 40517 / JCM 4748 / NBRC 13426 / NCIMB 8594 / NRRL 2338), this protein is UvrABC system protein C.